A 407-amino-acid polypeptide reads, in one-letter code: Phosphoglycerate kinase (407 aa).

Substrate is bound by residues 24–26 (DFN), arginine 40, 63–66 (HLGR), arginine 121, and arginine 154. ATP is bound by residues lysine 205, glutamate 337, and 363-366 (GGDS).

The protein belongs to the phosphoglycerate kinase family. In terms of assembly, monomer.

It localises to the cytoplasm. It carries out the reaction (2R)-3-phosphoglycerate + ATP = (2R)-3-phospho-glyceroyl phosphate + ADP. It participates in carbohydrate degradation; glycolysis; pyruvate from D-glyceraldehyde 3-phosphate: step 2/5. In Gloeobacter violaceus (strain ATCC 29082 / PCC 7421), this protein is Phosphoglycerate kinase.